Consider the following 217-residue polypeptide: AGAAELQPELAVAEHVRYESTGPALCTVVFLLVYFFGMASSIWWVILSLTWFLAAGMKWGNEAIAGYAQYFHLAAWLLPSVKSIAVLALSSVDGDPVAGICYVGNQSLENLRGFVLAPLVVYLFTGSLFLLAGFVSLFRIRSVIKQGGTKTDKLEKLMIRIGIFTVLYTVPATIVIACYIYEQHNREAWEQAQNCSCPGDPHRPKPDYAVFMLKYFM.

Over 1-26 the chain is Extracellular; the sequence is AGAAELQPELAVAEHVRYESTGPALC. A helical transmembrane segment spans residues 27–47; sequence TVVFLLVYFFGMASSIWWVIL. Over 48–69 the chain is Cytoplasmic; the sequence is SLTWFLAAGMKWGNEAIAGYAQ. The chain crosses the membrane as a helical span at residues 70–90; that stretch reads YFHLAAWLLPSVKSIAVLALS. At 91–113 the chain is on the extracellular side; sequence SVDGDPVAGICYVGNQSLENLRG. Asparagine 105 carries N-linked (GlcNAc...) asparagine glycosylation. The chain crosses the membrane as a helical span at residues 114-134; it reads FVLAPLVVYLFTGSLFLLAGF. Residues 135 to 160 lie on the Cytoplasmic side of the membrane; the sequence is VSLFRIRSVIKQGGTKTDKLEKLMIR. A helical membrane pass occupies residues 161–181; that stretch reads IGIFTVLYTVPATIVIACYIY. Residues 182–209 lie on the Extracellular side of the membrane; that stretch reads EQHNREAWEQAQNCSCPGDPHRPKPDYA. Residue asparagine 194 is glycosylated (N-linked (GlcNAc...) asparagine). A helical membrane pass occupies residues 210–217; that stretch reads VFMLKYFM.

The protein belongs to the G-protein coupled receptor Fz/Smo family.

The protein localises to the membrane. The protein resides in the cell membrane. Its function is as follows. Receptor for Wnt proteins. Most of frizzled receptors are coupled to the beta-catenin canonical signaling pathway, which leads to the activation of disheveled proteins, inhibition of GSK-3 kinase, nuclear accumulation of beta-catenin and activation of Wnt target genes. A second signaling pathway involving PKC and calcium fluxes has been seen for some family members, but it is not yet clear if it represents a distinct pathway or if it can be integrated in the canonical pathway, as PKC seems to be required for Wnt-mediated inactivation of GSK-3 kinase. Both pathways seem to involve interactions with G-proteins. May be involved in transduction and intercellular transmission of polarity information during tissue morphogenesis and/or in differentiated tissues. The sequence is that of Frizzled-8 (FZD8) from Gallus gallus (Chicken).